An 88-amino-acid chain; its full sequence is Otospiralin (88 aa).

The first 21 residues, 1–21 (MQACMVPGLALCLLLGSLTEA), serve as a signal peptide directing secretion.

Belongs to the otospiralin family. Ear specific.

Its subcellular location is the secreted. Its function is as follows. May be essential for the survival of the neurosensory epithelium of the inner ear. In Cavia porcellus (Guinea pig), this protein is Otospiralin (OTOS).